We begin with the raw amino-acid sequence, 401 residues long: Argininosuccinate synthase (401 aa).

ATP is bound at residue 8–16 (AYSGGLDTS). Residue tyrosine 87 coordinates L-citrulline. Position 117 (glycine 117) interacts with ATP. L-aspartate contacts are provided by threonine 119, asparagine 123, and aspartate 124. Residue asparagine 123 participates in L-citrulline binding. Positions 127, 175, 259, and 271 each coordinate L-citrulline.

It belongs to the argininosuccinate synthase family. Type 1 subfamily. As to quaternary structure, homotetramer.

It is found in the cytoplasm. It catalyses the reaction L-citrulline + L-aspartate + ATP = 2-(N(omega)-L-arginino)succinate + AMP + diphosphate + H(+). It functions in the pathway amino-acid biosynthesis; L-arginine biosynthesis; L-arginine from L-ornithine and carbamoyl phosphate: step 2/3. This is Argininosuccinate synthase from Arthrobacter sp. (strain FB24).